Consider the following 210-residue polypeptide: Na(+)-translocating NADH-quinone reductase subunit D (210 aa).

The next 5 helical transmembrane spans lie at 42 to 62 (FVMTLAVMFVTALSNFFVSLI), 72 to 92 (IIVQMAIIASLVIVVDQILKA), 103 to 123 (VFVGLIITNCIVMGRAEAFAM), 131 to 151 (FIDGIGNGLGYGFVLMTVGFF), and 178 to 198 (NGLMLLAPSAFFLIGFMIWAI).

It belongs to the NqrDE/RnfAE family. In terms of assembly, composed of six subunits; NqrA, NqrB, NqrC, NqrD, NqrE and NqrF.

It is found in the cell inner membrane. The enzyme catalyses a ubiquinone + n Na(+)(in) + NADH + H(+) = a ubiquinol + n Na(+)(out) + NAD(+). In terms of biological role, NQR complex catalyzes the reduction of ubiquinone-1 to ubiquinol by two successive reactions, coupled with the transport of Na(+) ions from the cytoplasm to the periplasm. NqrA to NqrE are probably involved in the second step, the conversion of ubisemiquinone to ubiquinol. The protein is Na(+)-translocating NADH-quinone reductase subunit D of Vibrio cholerae serotype O1 (strain M66-2).